The following is a 158-amino-acid chain: Urease accessory protein UreE (158 aa).

This sequence belongs to the UreE family.

Its subcellular location is the cytoplasm. Its function is as follows. Involved in urease metallocenter assembly. Binds nickel. Probably functions as a nickel donor during metallocenter assembly. In Microcystis aeruginosa (strain NIES-843 / IAM M-2473), this protein is Urease accessory protein UreE.